We begin with the raw amino-acid sequence, 473 residues long: Aspartyl/glutamyl-tRNA(Asn/Gln) amidotransferase subunit B (473 aa).

Belongs to the GatB/GatE family. GatB subfamily. As to quaternary structure, heterotrimer of A, B and C subunits.

The enzyme catalyses L-glutamyl-tRNA(Gln) + L-glutamine + ATP + H2O = L-glutaminyl-tRNA(Gln) + L-glutamate + ADP + phosphate + H(+). The catalysed reaction is L-aspartyl-tRNA(Asn) + L-glutamine + ATP + H2O = L-asparaginyl-tRNA(Asn) + L-glutamate + ADP + phosphate + 2 H(+). Allows the formation of correctly charged Asn-tRNA(Asn) or Gln-tRNA(Gln) through the transamidation of misacylated Asp-tRNA(Asn) or Glu-tRNA(Gln) in organisms which lack either or both of asparaginyl-tRNA or glutaminyl-tRNA synthetases. The reaction takes place in the presence of glutamine and ATP through an activated phospho-Asp-tRNA(Asn) or phospho-Glu-tRNA(Gln). The polypeptide is Aspartyl/glutamyl-tRNA(Asn/Gln) amidotransferase subunit B (Francisella tularensis subsp. mediasiatica (strain FSC147)).